Reading from the N-terminus, the 233-residue chain is Uridylate kinase (233 aa).

Residues 8-11, G51, and R55 each bind ATP; that span reads KLSG. UMP contacts are provided by residues D68 and 129–136; that span reads TSNPFFTT. ATP is bound by residues T156, Y162, and D165.

Belongs to the UMP kinase family. As to quaternary structure, homohexamer.

It is found in the cytoplasm. It catalyses the reaction UMP + ATP = UDP + ADP. Its pathway is pyrimidine metabolism; CTP biosynthesis via de novo pathway; UDP from UMP (UMPK route): step 1/1. Inhibited by UTP. Functionally, catalyzes the reversible phosphorylation of UMP to UDP. The protein is Uridylate kinase of Thermosipho melanesiensis (strain DSM 12029 / CIP 104789 / BI429).